An 861-amino-acid chain; its full sequence is Leucine--tRNA ligase (861 aa).

Residues 42-52 (PYPSGRLHMGH) carry the 'HIGH' region motif. The 'KMSKS' region motif lies at 619 to 623 (KMSKS). K622 lines the ATP pocket.

The protein belongs to the class-I aminoacyl-tRNA synthetase family.

The protein localises to the cytoplasm. The enzyme catalyses tRNA(Leu) + L-leucine + ATP = L-leucyl-tRNA(Leu) + AMP + diphosphate. In Haemophilus influenzae (strain ATCC 51907 / DSM 11121 / KW20 / Rd), this protein is Leucine--tRNA ligase.